Reading from the N-terminus, the 89-residue chain is Small ribosomal subunit protein uS15 (89 aa).

Belongs to the universal ribosomal protein uS15 family. In terms of assembly, part of the 30S ribosomal subunit. Forms a bridge to the 50S subunit in the 70S ribosome, contacting the 23S rRNA.

In terms of biological role, one of the primary rRNA binding proteins, it binds directly to 16S rRNA where it helps nucleate assembly of the platform of the 30S subunit by binding and bridging several RNA helices of the 16S rRNA. Functionally, forms an intersubunit bridge (bridge B4) with the 23S rRNA of the 50S subunit in the ribosome. This is Small ribosomal subunit protein uS15 from Saccharophagus degradans (strain 2-40 / ATCC 43961 / DSM 17024).